The primary structure comprises 61 residues: Large ribosomal subunit protein eL37 (61 aa).

Residues Cys-19, Cys-22, Cys-34, and Cys-37 each coordinate Zn(2+). A C4-type zinc finger spans residues 19–37; that stretch reads CRRCGRNAYNVSKHYCAAC.

The protein belongs to the eukaryotic ribosomal protein eL37 family. It depends on Zn(2+) as a cofactor.

In terms of biological role, binds to the 23S rRNA. This Saccharolobus solfataricus (strain ATCC 35092 / DSM 1617 / JCM 11322 / P2) (Sulfolobus solfataricus) protein is Large ribosomal subunit protein eL37 (rpl37e).